Here is a 349-residue protein sequence, read N- to C-terminus: 4-hydroxy-3-methylbut-2-enyl diphosphate reductase (349 aa).

Cys18 serves as a coordination point for [4Fe-4S] cluster. 2 residues coordinate (2E)-4-hydroxy-3-methylbut-2-enyl diphosphate: His47 and His83. Dimethylallyl diphosphate-binding residues include His47 and His83. Positions 47 and 83 each coordinate isopentenyl diphosphate. Cys105 serves as a coordination point for [4Fe-4S] cluster. Residue His133 coordinates (2E)-4-hydroxy-3-methylbut-2-enyl diphosphate. His133 lines the dimethylallyl diphosphate pocket. Residue His133 participates in isopentenyl diphosphate binding. Catalysis depends on Glu135, which acts as the Proton donor. Residue Thr174 participates in (2E)-4-hydroxy-3-methylbut-2-enyl diphosphate binding. Cys204 contributes to the [4Fe-4S] cluster binding site. (2E)-4-hydroxy-3-methylbut-2-enyl diphosphate contacts are provided by Ser232, Ser233, Asn234, and Ser277. 4 residues coordinate dimethylallyl diphosphate: Ser232, Ser233, Asn234, and Ser277. Positions 232, 233, 234, and 277 each coordinate isopentenyl diphosphate.

It belongs to the IspH family. Requires [4Fe-4S] cluster as cofactor.

The enzyme catalyses isopentenyl diphosphate + 2 oxidized [2Fe-2S]-[ferredoxin] + H2O = (2E)-4-hydroxy-3-methylbut-2-enyl diphosphate + 2 reduced [2Fe-2S]-[ferredoxin] + 2 H(+). It catalyses the reaction dimethylallyl diphosphate + 2 oxidized [2Fe-2S]-[ferredoxin] + H2O = (2E)-4-hydroxy-3-methylbut-2-enyl diphosphate + 2 reduced [2Fe-2S]-[ferredoxin] + 2 H(+). It functions in the pathway isoprenoid biosynthesis; dimethylallyl diphosphate biosynthesis; dimethylallyl diphosphate from (2E)-4-hydroxy-3-methylbutenyl diphosphate: step 1/1. It participates in isoprenoid biosynthesis; isopentenyl diphosphate biosynthesis via DXP pathway; isopentenyl diphosphate from 1-deoxy-D-xylulose 5-phosphate: step 6/6. Catalyzes the conversion of 1-hydroxy-2-methyl-2-(E)-butenyl 4-diphosphate (HMBPP) into a mixture of isopentenyl diphosphate (IPP) and dimethylallyl diphosphate (DMAPP). Acts in the terminal step of the DOXP/MEP pathway for isoprenoid precursor biosynthesis. In Bartonella bacilliformis (strain ATCC 35685 / KC583 / Herrer 020/F12,63), this protein is 4-hydroxy-3-methylbut-2-enyl diphosphate reductase.